Here is a 97-residue protein sequence, read N- to C-terminus: Putative membrane protein insertion efficiency factor (97 aa).

It belongs to the UPF0161 family.

Its subcellular location is the cell membrane. Could be involved in insertion of integral membrane proteins into the membrane. The polypeptide is Putative membrane protein insertion efficiency factor (Lactobacillus johnsonii (strain CNCM I-12250 / La1 / NCC 533)).